The chain runs to 169 residues: Shikimate kinase (169 aa).

ATP is bound at residue 13 to 18 (GAGKST). S17 contacts Mg(2+). D35, R59, and G80 together coordinate substrate. R117 provides a ligand contact to ATP. R136 is a substrate binding site. R153 contacts ATP.

Belongs to the shikimate kinase family. As to quaternary structure, monomer. The cofactor is Mg(2+).

Its subcellular location is the cytoplasm. The enzyme catalyses shikimate + ATP = 3-phosphoshikimate + ADP + H(+). It participates in metabolic intermediate biosynthesis; chorismate biosynthesis; chorismate from D-erythrose 4-phosphate and phosphoenolpyruvate: step 5/7. Its function is as follows. Catalyzes the specific phosphorylation of the 3-hydroxyl group of shikimic acid using ATP as a cosubstrate. In Corynebacterium glutamicum (strain ATCC 13032 / DSM 20300 / JCM 1318 / BCRC 11384 / CCUG 27702 / LMG 3730 / NBRC 12168 / NCIMB 10025 / NRRL B-2784 / 534), this protein is Shikimate kinase.